Consider the following 149-residue polypeptide: 3-dehydroquinate dehydratase (149 aa).

Tyr-26 serves as the catalytic Proton acceptor. 3 residues coordinate substrate: Asn-77, His-83, and Asp-90. Catalysis depends on His-103, which acts as the Proton donor. Substrate contacts are provided by residues 104–105 (LS) and Arg-114.

This sequence belongs to the type-II 3-dehydroquinase family. As to quaternary structure, homododecamer.

It carries out the reaction 3-dehydroquinate = 3-dehydroshikimate + H2O. Its pathway is metabolic intermediate biosynthesis; chorismate biosynthesis; chorismate from D-erythrose 4-phosphate and phosphoenolpyruvate: step 3/7. Its function is as follows. Catalyzes a trans-dehydration via an enolate intermediate. This Vibrio vulnificus (strain YJ016) protein is 3-dehydroquinate dehydratase.